Consider the following 176-residue polypeptide: Peptidoglycan-associated lipoprotein (176 aa).

Residues 1 to 32 form the signal peptide; sequence MSRIDTPAASRMQTIARNPVMIALVMTLALAG. A lipid anchor (N-palmitoyl cysteine) is attached at Cys-33. A lipid anchor (S-diacylglycerol cysteine) is attached at Cys-33. In terms of domain architecture, OmpA-like spans 58–175; sequence QQDFTVNVGD…RAVTVLGGAG (118 aa).

This sequence belongs to the Pal lipoprotein family. In terms of assembly, the Tol-Pal system is composed of five core proteins: the inner membrane proteins TolA, TolQ and TolR, the periplasmic protein TolB and the outer membrane protein Pal. They form a network linking the inner and outer membranes and the peptidoglycan layer.

It is found in the cell outer membrane. Its function is as follows. Part of the Tol-Pal system, which plays a role in outer membrane invagination during cell division and is important for maintaining outer membrane integrity. The protein is Peptidoglycan-associated lipoprotein of Rhizobium meliloti (strain 1021) (Ensifer meliloti).